We begin with the raw amino-acid sequence, 795 residues long: Phenylalanine--tRNA ligase beta subunit (795 aa).

Residues 39–148 (AGSFHGVVVG…ADAPIGTDIR (110 aa)) enclose the tRNA-binding domain. The 76-residue stretch at 401 to 476 (PKRATITLRR…RVYGYNNIPD (76 aa)) folds into the B5 domain. Mg(2+) contacts are provided by Asp454, Asp460, Glu463, and Glu464. The 94-residue stretch at 701–794 (SRFPANRRDI…LKERFQASLR (94 aa)) folds into the FDX-ACB domain.

Belongs to the phenylalanyl-tRNA synthetase beta subunit family. Type 1 subfamily. In terms of assembly, tetramer of two alpha and two beta subunits. It depends on Mg(2+) as a cofactor.

Its subcellular location is the cytoplasm. The enzyme catalyses tRNA(Phe) + L-phenylalanine + ATP = L-phenylalanyl-tRNA(Phe) + AMP + diphosphate + H(+). This Shigella boydii serotype 4 (strain Sb227) protein is Phenylalanine--tRNA ligase beta subunit.